We begin with the raw amino-acid sequence, 700 residues long: Elongation factor G (700 aa).

Positions 10 to 286 (NKVRNIGIMA…AVIDYLPNPL (277 aa)) constitute a tr-type G domain. GTP is bound by residues 19–26 (AHIDAGKT), 83–87 (DTPGH), and 137–140 (NKMD).

Belongs to the TRAFAC class translation factor GTPase superfamily. Classic translation factor GTPase family. EF-G/EF-2 subfamily.

Its subcellular location is the cytoplasm. Its function is as follows. Catalyzes the GTP-dependent ribosomal translocation step during translation elongation. During this step, the ribosome changes from the pre-translocational (PRE) to the post-translocational (POST) state as the newly formed A-site-bound peptidyl-tRNA and P-site-bound deacylated tRNA move to the P and E sites, respectively. Catalyzes the coordinated movement of the two tRNA molecules, the mRNA and conformational changes in the ribosome. The chain is Elongation factor G from Rhodococcus opacus (strain B4).